A 384-amino-acid polypeptide reads, in one-letter code: Lipid-A-disaccharide synthase 1 (384 aa).

This sequence belongs to the LpxB family.

The catalysed reaction is a lipid X + a UDP-2-N,3-O-bis[(3R)-3-hydroxyacyl]-alpha-D-glucosamine = a lipid A disaccharide + UDP + H(+). The protein operates within bacterial outer membrane biogenesis; LPS lipid A biosynthesis. Functionally, condensation of UDP-2,3-diacylglucosamine and 2,3-diacylglucosamine-1-phosphate to form lipid A disaccharide, a precursor of lipid A, a phosphorylated glycolipid that anchors the lipopolysaccharide to the outer membrane of the cell. This chain is Lipid-A-disaccharide synthase 1, found in Legionella pneumophila (strain Paris).